We begin with the raw amino-acid sequence, 362 residues long: Dual-specificity RNA methyltransferase RlmN (362 aa).

Residue Glu-91 is the Proton acceptor of the active site. Positions 97-333 (EDDRGTLCVS…VTTRKTRGED (237 aa)) constitute a Radical SAM core domain. Residues Cys-104 and Cys-338 are joined by a disulfide bond. Cys-111, Cys-115, and Cys-118 together coordinate [4Fe-4S] cluster. S-adenosyl-L-methionine contacts are provided by residues 164 to 165 (GE), Ser-196, 218 to 220 (SLH), and Asn-295. Residue Cys-338 is the S-methylcysteine intermediate of the active site.

It belongs to the radical SAM superfamily. RlmN family. The cofactor is [4Fe-4S] cluster.

It localises to the cytoplasm. The catalysed reaction is adenosine(2503) in 23S rRNA + 2 reduced [2Fe-2S]-[ferredoxin] + 2 S-adenosyl-L-methionine = 2-methyladenosine(2503) in 23S rRNA + 5'-deoxyadenosine + L-methionine + 2 oxidized [2Fe-2S]-[ferredoxin] + S-adenosyl-L-homocysteine. It catalyses the reaction adenosine(37) in tRNA + 2 reduced [2Fe-2S]-[ferredoxin] + 2 S-adenosyl-L-methionine = 2-methyladenosine(37) in tRNA + 5'-deoxyadenosine + L-methionine + 2 oxidized [2Fe-2S]-[ferredoxin] + S-adenosyl-L-homocysteine. Specifically methylates position 2 of adenine 2503 in 23S rRNA and position 2 of adenine 37 in tRNAs. m2A2503 modification seems to play a crucial role in the proofreading step occurring at the peptidyl transferase center and thus would serve to optimize ribosomal fidelity. The protein is Dual-specificity RNA methyltransferase RlmN of Methylobacillus flagellatus (strain ATCC 51484 / DSM 6875 / VKM B-1610 / KT).